A 150-amino-acid chain; its full sequence is 3-hydroxyacyl-[acyl-carrier-protein] dehydratase FabZ (150 aa).

The active site involves H52.

Belongs to the thioester dehydratase family. FabZ subfamily.

It is found in the cytoplasm. It catalyses the reaction a (3R)-hydroxyacyl-[ACP] = a (2E)-enoyl-[ACP] + H2O. Its function is as follows. Involved in unsaturated fatty acids biosynthesis. Catalyzes the dehydration of short chain beta-hydroxyacyl-ACPs and long chain saturated and unsaturated beta-hydroxyacyl-ACPs. This is 3-hydroxyacyl-[acyl-carrier-protein] dehydratase FabZ from Variovorax paradoxus (strain S110).